We begin with the raw amino-acid sequence, 484 residues long: MKVLFVVSECVPFVKTGGLADVAGALPKELKKLGTDVRVMLPKYGLIPQHMRQKMKKIAELVVRVGWRRQYCGIEQLEHEGITYYFVDNEYYFKRDSLYGHYDDGERFSYFCRAVLDCLPVIDFQPNVIHCHDWHTGMIPFLLREEYMRNSFYAQMKTVFTIHNLQFQGIFPREILGDLLNLSDRYFSIEHLEFYGHVSFMKGALVSAHLITTVSPTYKEEIQTPYYGERLDGLLRARSSHLVGILNGIDDEIYNPKKDPYIAVPYDVTTIARKSINKRALQQHFSLPSEEDVPVIAIVSRLTKQKGLDLVKCVFHEIIAEHVQMIILGTGEWEFEQFFQDMTMTYPDRVRVYIGFSEQLAHQIYAGADMFLMPSKFEPCGLGQMIAMRYGAVPIVRETGGLNDTVQSFNELTKEGTGFTFKNFNAHDMLYTIQRARSFYEQKEIWETIMKQAMSRDYSWAKSAFKYNQLYDELMAGSGIYVHE.

Lys15 is a binding site for ADP-alpha-D-glucose.

Belongs to the glycosyltransferase 1 family. Bacterial/plant glycogen synthase subfamily.

The enzyme catalyses [(1-&gt;4)-alpha-D-glucosyl](n) + ADP-alpha-D-glucose = [(1-&gt;4)-alpha-D-glucosyl](n+1) + ADP + H(+). It participates in glycan biosynthesis; glycogen biosynthesis. Synthesizes alpha-1,4-glucan chains using ADP-glucose. The chain is Glycogen synthase from Anoxybacillus flavithermus (strain DSM 21510 / WK1).